The sequence spans 546 residues: Chaperonin GroEL 3 (546 aa).

ATP-binding positions include 30-33, Lys-51, 87-91, Gly-415, and Asp-496; these read TLGP and DGTTT.

It belongs to the chaperonin (HSP60) family. As to quaternary structure, forms a cylinder of 14 subunits composed of two heptameric rings stacked back-to-back. Interacts with the co-chaperonin GroES.

Its subcellular location is the cytoplasm. The enzyme catalyses ATP + H2O + a folded polypeptide = ADP + phosphate + an unfolded polypeptide.. Its function is as follows. Together with its co-chaperonin GroES, plays an essential role in assisting protein folding. The GroEL-GroES system forms a nano-cage that allows encapsulation of the non-native substrate proteins and provides a physical environment optimized to promote and accelerate protein folding. This Bradyrhizobium diazoefficiens (strain JCM 10833 / BCRC 13528 / IAM 13628 / NBRC 14792 / USDA 110) protein is Chaperonin GroEL 3.